The sequence spans 561 residues: Lysine--tRNA ligase (561 aa).

Glu-409 and Glu-416 together coordinate Mg(2+).

This sequence belongs to the class-II aminoacyl-tRNA synthetase family. As to quaternary structure, homodimer. Mg(2+) is required as a cofactor.

It is found in the cytoplasm. The catalysed reaction is tRNA(Lys) + L-lysine + ATP = L-lysyl-tRNA(Lys) + AMP + diphosphate. The protein is Lysine--tRNA ligase of Nostoc sp. (strain PCC 7120 / SAG 25.82 / UTEX 2576).